A 63-amino-acid chain; its full sequence is UPF0391 membrane protein lpg2415 (63 aa).

2 helical membrane passes run 4 to 24 (WALIFLIVAIVAGLFGFRGVA) and 33 to 53 (VLFFLFIVMFIVLLVFSLLGG).

The protein belongs to the UPF0391 family.

Its subcellular location is the cell membrane. The chain is UPF0391 membrane protein lpg2415 from Legionella pneumophila subsp. pneumophila (strain Philadelphia 1 / ATCC 33152 / DSM 7513).